Consider the following 680-residue polypeptide: MRSFATQQNGIFKSVCSLDCPDQCGLLIHKKDGKIVKVQGDPDHPVTAGNICNKVRNMTERIYDEKRLTTPLKRTGAKGQAIFEPISWKEAIDTITSRWKQLIDEEGAESILPYSFYGNMGKLTAEGMDRRFFYRMGSSQLERTICSKAGSEGYKYTMGISAGIDPEETVHTKLFIFWGINAVSTNMHQITIAQKARKKGAKIVVIDVHKNQTGRLADWFIPIKPGTDSALALGIMHILFKENLHDEAFLSEYTVGYEELREHVKQYDPEKVSTITGVSTEDIYRLAKMYGETSPSFIRIGNGPQHHDNGGMIVRTIACLPAITGQWLHTGGGAIKHNSGILEYNTNALQRPDLLKGRTPRSFNMNQLGRVLLETDPPIRSLFIYGTNPAVVAPEANKVRQGLLREDLFTVVHDLFLTETAAYADIVLPATSAFENTDFYTSYWHHYIQLQQPVIERYGESKSNTEVFRLLAEAMGFTDQELKDSDEVLIRQALDHPDNPHLAEIDYDSLTKHSFMKAKREKPLFPGELPTPSGKIELYSEKMKQDGFPALPTYTPLVTDNEHPFMYVPGPNHNFLNSTFSNNEKHIKLEKTPKLFINTKDAEKHGIVDGAPVRIWNSRGECELTAAVGEQVLPGVVVSQGLWADEQGKKQLVNALTPDRLSDMGGGATFFSGRVQIEKV.

Residues 9–66 enclose the 4Fe-4S Mo/W bis-MGD-type domain; that stretch reads NGIFKSVCSLDCPDQCGLLIHKKDGKIVKVQGDPDHPVTAGNICNKVRNMTERIYDEK. Residues Cys16, Cys20, Cys24, and Cys52 each coordinate [4Fe-4S] cluster.

It belongs to the prokaryotic molybdopterin-containing oxidoreductase family. The cofactor is Mo-bis(molybdopterin guanine dinucleotide).

This chain is Probable oxidoreductase YoaE (yoaE), found in Bacillus subtilis (strain 168).